The following is a 114-amino-acid chain: Hydrogenase maturation factor HypA (114 aa).

Residue His-2 participates in Ni(2+) binding. Residues Cys-74, Cys-77, Cys-90, and Cys-93 each contribute to the Zn(2+) site.

Belongs to the HypA/HybF family.

Functionally, involved in the maturation of [NiFe] hydrogenases. Required for nickel insertion into the metal center of the hydrogenase. The chain is Hydrogenase maturation factor HypA from Campylobacter jejuni subsp. jejuni serotype O:2 (strain ATCC 700819 / NCTC 11168).